The sequence spans 778 residues: Probable potassium transporter 13 (778 aa).

The Cytoplasmic portion of the chain corresponds to 1-28 (MDVEGGGGGGGGAPPRGRNSWGWQKGTL). Residues 29–49 (LLAYQSFGVVYGDLCISPVYV) traverse the membrane as a helical segment. Topologically, residues 50 to 72 (YKNTFSGKLRLHEEDEEILGVLS) are extracellular. The chain crosses the membrane as a helical span at residues 73 to 93 (LVFWSLTLIPLLKYIILVLGA). Residues 94-156 (DDNGEGGTFA…AFFEKHYSLR (63 aa)) lie on the Cytoplasmic side of the membrane. A helical membrane pass occupies residues 157–177 (VVLLLFVLMGTSMVIGDGVLT). Over 178-199 (PTMSVLAAVSGLRIKFPELHEN) the chain is Extracellular. An N-linked (GlcNAc...) asparagine glycan is attached at N199. Residues 200–220 (YTVLLACVILIGLFALQHYGT) traverse the membrane as a helical segment. The Cytoplasmic portion of the chain corresponds to 221-222 (RR). A helical transmembrane segment spans residues 223–243 (VGFLFAPILISWLTCIGGIGI). Residues 244–276 (YNIIKWNPSVIRALSPYYIYNFFRKAGKDGWSS) are Extracellular-facing. Residues 277–297 (LGGIVLCLTGAEAMFADLGHF) traverse the membrane as a helical segment. The Cytoplasmic portion of the chain corresponds to 298-303 (SKLSLR). Residues 304–324 (LGFTIVVYPCLVLAYMGEAAY) form a helical membrane-spanning segment. Over 325–343 (LSKHREDLQSSFYKALPDR) the chain is Extracellular. A helical membrane pass occupies residues 344 to 364 (VFWPVLFIATLATAVGSQAII). Residues 365 to 395 (SATFSIISQCRALGCFPRIKVVHTSSHVHGQ) are Cytoplasmic-facing. Residues 396–416 (IYIPEVNWVLMSLCLAVTIGF) traverse the membrane as a helical segment. Residues 417-424 (RDTEMIGN) are Extracellular-facing. A helical membrane pass occupies residues 425–445 (AYGLAVILVMCATTCLMFLVI). At 446-451 (TTVWNR) the chain is on the cytoplasmic side. The helical transmembrane segment at 452 to 472 (WVVWAAAFTVVFGSVELLYLS) threads the bilayer. Residues 473 to 477 (ACLAK) lie on the Extracellular side of the membrane. A helical membrane pass occupies residues 478–498 (VPHGGWLPLLLSLTTLLVMST). Topologically, residues 499 to 778 (WHYGTAMKQQ…LIEVGMAYRV (280 aa)) are cytoplasmic. The span at 655 to 677 (PATSSSGGSNQHAFDAGTTTSSC) shows a compositional bias: polar residues. The disordered stretch occupies residues 655-704 (PATSSSGGSNQHAFDAGTTTSSCEIDATAGGGGRRKVRFDNDGGGGGEEE).

The protein belongs to the HAK/KUP transporter (TC 2.A.72.3) family.

It localises to the membrane. High-affinity potassium transporter. The polypeptide is Probable potassium transporter 13 (HAK13) (Oryza sativa subsp. japonica (Rice)).